The sequence spans 454 residues: Bifunctional protein GlmU (454 aa).

The segment at 1–227 is pyrophosphorylase; the sequence is MTQLSVVILA…FMEVEGANNR (227 aa). Residues 9-12, Lys-23, Gln-74, 79-80, 101-103, Gly-138, Glu-152, Asn-167, and Asn-225 contribute to the UDP-N-acetyl-alpha-D-glucosamine site; these read LAAG, GT, and YGD. Asp-103 serves as a coordination point for Mg(2+). Mg(2+) is bound at residue Asn-225. The segment at 228-248 is linker; that stretch reads LQLAALERFYQKTQAEKLLLA. Positions 249–454 are N-acetyltransferase; sequence GVRLIDQARF…QGWQRPTKKK (206 aa). UDP-N-acetyl-alpha-D-glucosamine-binding residues include Arg-331 and Lys-349. His-361 functions as the Proton acceptor in the catalytic mechanism. UDP-N-acetyl-alpha-D-glucosamine is bound by residues Tyr-364 and Asn-375. Residues Ala-378, 384–385, Ser-403, Ala-421, and Arg-438 contribute to the acetyl-CoA site; that span reads NY.

The protein in the N-terminal section; belongs to the N-acetylglucosamine-1-phosphate uridyltransferase family. This sequence in the C-terminal section; belongs to the transferase hexapeptide repeat family. Homotrimer. Requires Mg(2+) as cofactor.

The protein resides in the cytoplasm. It catalyses the reaction alpha-D-glucosamine 1-phosphate + acetyl-CoA = N-acetyl-alpha-D-glucosamine 1-phosphate + CoA + H(+). The catalysed reaction is N-acetyl-alpha-D-glucosamine 1-phosphate + UTP + H(+) = UDP-N-acetyl-alpha-D-glucosamine + diphosphate. It participates in nucleotide-sugar biosynthesis; UDP-N-acetyl-alpha-D-glucosamine biosynthesis; N-acetyl-alpha-D-glucosamine 1-phosphate from alpha-D-glucosamine 6-phosphate (route II): step 2/2. The protein operates within nucleotide-sugar biosynthesis; UDP-N-acetyl-alpha-D-glucosamine biosynthesis; UDP-N-acetyl-alpha-D-glucosamine from N-acetyl-alpha-D-glucosamine 1-phosphate: step 1/1. It functions in the pathway bacterial outer membrane biogenesis; LPS lipid A biosynthesis. Catalyzes the last two sequential reactions in the de novo biosynthetic pathway for UDP-N-acetylglucosamine (UDP-GlcNAc). The C-terminal domain catalyzes the transfer of acetyl group from acetyl coenzyme A to glucosamine-1-phosphate (GlcN-1-P) to produce N-acetylglucosamine-1-phosphate (GlcNAc-1-P), which is converted into UDP-GlcNAc by the transfer of uridine 5-monophosphate (from uridine 5-triphosphate), a reaction catalyzed by the N-terminal domain. In Actinobacillus pleuropneumoniae serotype 7 (strain AP76), this protein is Bifunctional protein GlmU.